The chain runs to 154 residues: NADPH-dependent 7-cyano-7-deazaguanine reductase (154 aa).

Positions 1–13 (MSVTDVSGLSQLG) are enriched in polar residues. The segment at 1 to 30 (MSVTDVSGLSQLGTKVDTPESPEKAVLEKV) is disordered. A compositionally biased stretch (basic and acidic residues) spans 17–27 (DTPESPEKAVL). Cys52 acts as the Thioimide intermediate in catalysis. The active-site Proton donor is the Asp59. Substrate is bound by residues 74–76 (VES) and 93–94 (HE).

It belongs to the GTP cyclohydrolase I family. QueF type 1 subfamily.

Its subcellular location is the cytoplasm. It catalyses the reaction 7-aminomethyl-7-carbaguanine + 2 NADP(+) = 7-cyano-7-deazaguanine + 2 NADPH + 3 H(+). Its pathway is tRNA modification; tRNA-queuosine biosynthesis. In terms of biological role, catalyzes the NADPH-dependent reduction of 7-cyano-7-deazaguanine (preQ0) to 7-aminomethyl-7-deazaguanine (preQ1). In Agrobacterium fabrum (strain C58 / ATCC 33970) (Agrobacterium tumefaciens (strain C58)), this protein is NADPH-dependent 7-cyano-7-deazaguanine reductase.